We begin with the raw amino-acid sequence, 227 residues long: PKHD-type hydroxylase Neut_0373 (227 aa).

A Fe2OG dioxygenase domain is found at 78–179 (KIMPPFFNRY…RIACFMFIQS (102 aa)). Fe cation-binding residues include H97, D99, and H160. A 2-oxoglutarate-binding site is contributed by R170.

The cofactor is Fe(2+). L-ascorbate serves as cofactor.

This chain is PKHD-type hydroxylase Neut_0373, found in Nitrosomonas eutropha (strain DSM 101675 / C91 / Nm57).